A 2049-amino-acid chain; its full sequence is Nonribosomal peptide synthetase tcpP (2049 aa).

Residues 13 to 395 are adenylation 1; the sequence is RHHAEAHPEA…LGRKDQLIKN (383 aa). The Carrier 1 domain maps to 497–573; it reads ATADTKLSAL…EISNHIIEFD (77 aa). Ser-534 carries the post-translational modification O-(pantetheine 4'-phosphoryl)serine. The segment at 605–913 is condensation 1; that stretch reads REITMTDVQR…ALGSKMDLLS (309 aa). The segment at 1071–1452 is adenylation 2; it reads VAAWPMSVAL…GRADHQVKVR (382 aa). The Carrier 2 domain occupies 1550 to 1625; sequence DHTELVVSQV…SLAASVKKHL (76 aa). Ser-1585 bears the O-(pantetheine 4'-phosphoryl)serine mark. Residues 1662–2044 are condensation 2; that stretch reads MHKQASNPSS…FEQEICNLLD (383 aa).

The protein belongs to the NRP synthetase family.

The protein operates within secondary metabolite biosynthesis. Functionally, nonribosomal peptide synthetase; part of the gene cluster that mediates the biosynthesis of an unusual class of epipolythiodioxopiperazines (ETPs) lacking the reactive thiol group important for toxicity. Firstly, L-tyrosine is prenylated by tcpD, before undergoing condensation with L-glycine in a reaction catalyzed by the NRPS tcpP leading to the diketopiperazine (DKP) backbone. Afterwards the alpha-carbon of tyrosine is oxidized by the cytochrome P450 tcpC to form a hydroxyl group. However, in contrast other ETP biosynthesis pathways studied so far, tcpC is not able to bishydroxylate the DKP at both alpha-carbon positions, but hydroxylates the alpha-carbon of the tyrosine part and the nitrogen of the glycine part. The next steps involve an alpha,beta-elimination reaction catalyzed by tcpI, a methylation by the methyltransferase tcpN the action of the four enzyme cascade tcpG/K/J/I. Due to a dysfunctional cytochrome P450 monooxygenase tcpC, the pathway leads to the biosynthesis of probable non-toxic metabolites lacking the reactive thiol group. The polypeptide is Nonribosomal peptide synthetase tcpP (Claviceps purpurea (strain 20.1) (Ergot fungus)).